The primary structure comprises 381 residues: Cobalt-precorrin-5B C(1)-methyltransferase (381 aa).

The protein belongs to the CbiD family.

The enzyme catalyses Co-precorrin-5B + S-adenosyl-L-methionine = Co-precorrin-6A + S-adenosyl-L-homocysteine. The protein operates within cofactor biosynthesis; adenosylcobalamin biosynthesis; cob(II)yrinate a,c-diamide from sirohydrochlorin (anaerobic route): step 6/10. Catalyzes the methylation of C-1 in cobalt-precorrin-5B to form cobalt-precorrin-6A. The polypeptide is Cobalt-precorrin-5B C(1)-methyltransferase (Clostridium botulinum (strain Eklund 17B / Type B)).